A 114-amino-acid polypeptide reads, in one-letter code: Ribulose bisphosphate carboxylase small subunit 2 (114 aa).

Belongs to the RuBisCO small chain family. Heterohexadecamer of 8 large and 8 small subunits. Forms a CsoS2-CsoS1-RuBisCO complex.

The protein localises to the carboxysome. RuBisCO catalyzes two reactions: the carboxylation of D-ribulose 1,5-bisphosphate, the primary event in carbon dioxide fixation, as well as the oxidative fragmentation of the pentose substrate. Both reactions occur simultaneously and in competition at the same active site. Although the small subunit is not catalytic it is essential for maximal activity. Its function is as follows. Replacing the endogenous type I ccbLS genes in H.neapolitanus with this carboxysomally targeted enzyme reconstitutes RuBisCO with about 25% of normal activity; the active enzyme is targeted to carboxysomes. The polypeptide is Ribulose bisphosphate carboxylase small subunit 2 (Hydrogenovibrio crunogenus (strain DSM 25203 / XCL-2) (Thiomicrospira crunogena)).